We begin with the raw amino-acid sequence, 65 residues long: uncharacterized protein (65 aa).

This is an uncharacterized protein from Bacillus subtilis (Bacteriophage phi-105).